The sequence spans 608 residues: Scaffold protein salvador (608 aa).

Disordered regions lie at residues 17–37 (SRRNKEKSQHKEGVVGKYMKK), 64–145 (STSP…SQNS), 157–202 (MRRQ…YDAD), 220–243 (PHSPAHYAVPPQQQQHPQIHQQHA), 264–293 (QPRYQPTSSPMQQQQQQQQQQQQQLQHTQL), and 345–425 (PQHH…ELPL). Residues 22-37 (EKSQHKEGVVGKYMKK) show a composition bias toward basic and acidic residues. Positions 32–38 (GKYMKKD) match the Ferm-binding motif (FBM) motif. Residues 64–89 (STSPSCEFHPRSSSTSRNTYSCTDSQ) show a composition bias toward polar residues. Over residues 108–125 (SHSHPHSLPHPSHPHVRS) the composition is skewed to basic residues. Composition is skewed to low complexity over residues 160–172 (QQSSPLLQTTSSP), 229–242 (PPQQQQHPQIHQQH), and 275–289 (QQQQQQQQQQQQQLQ). Positions 274–294 (MQQQQQQQQQQQQQLQHTQLA) form a coiled coil. Gly residues predominate over residues 358–373 (GSGGGSLSGSGRGGSS). 2 positions are modified to phosphoserine: S413 and S416. WW domains lie at 423–456 (LPLPPGWATQYTLHGRKYYIDHNAHTTHWNHPLE) and 458–491 (EGLPVGWRRVVSKMHGTYYENQYTGQSQRQHPCL). One can recognise an SARAH domain in the interval 552-599 (LLQFNMFSLPELEGFDSMLVRLFKQELGTIVGFYERYRRALILEKNRR).

As to quaternary structure, interacts with Wts via its WW domains. Interacts (via FBM motif) with Mer (via FERM domain). Interacts with Kibra. Interacts with Hpo (via SARAH domain). Interacts with jub. In terms of processing, phosphorylated by Hpo. Third instar larvae eye disk, expressed in a stripe in the morphogenetic furrow, decreases in the region of the second mitotic wave (SMW) and increases once again posterior to the SMW.

Functionally, plays a key role in the Hippo/SWH (Sav/Wts/Hpo) signaling pathway, a signaling pathway that plays a pivotal role in organ size control and tumor suppression by restricting proliferation and promoting apoptosis. The core of this pathway is composed of a kinase cascade wherein Hippo (Hpo), in complex with its regulatory protein Salvador (Sav), phosphorylates and activates Warts (Wts) in complex with its regulatory protein Mats, which in turn phosphorylates and inactivates the Yorkie (Yki) oncoprotein. The Hippo/SWH signaling pathway inhibits the activity of the transcriptional complex formed by Scalloped (sd) and Yki and the target genes of this pathway include cyclin-E (cycE), diap1 and bantam. Required for cell cycle exit in eye imaginal disk and hid-induced apoptotic cell deaths that are part of normal retinal development. Activation of Drice in eye imaginal disk by either Hid or Rpr is almost completely blocked by Sav expression. The chain is Scaffold protein salvador (sav) from Drosophila melanogaster (Fruit fly).